The following is a 363-amino-acid chain: D-proline dehydrogenase (363 aa).

Position 3–17 (V3–Y17) interacts with FAD.

Belongs to the DadA oxidoreductase family. In terms of assembly, homotetramer. FAD serves as cofactor.

It localises to the cell membrane. The enzyme catalyses D-proline + A = 1-pyrroline-2-carboxylate + AH2. Functionally, catalyzes the dehydrogenation of D-proline. Can also use other D-amino acids, but with lower efficiency. This chain is D-proline dehydrogenase (dpdh), found in Pyrobaculum islandicum (strain DSM 4184 / JCM 9189 / GEO3).